The chain runs to 392 residues: Digeranylgeranylglycerophospholipid reductase (392 aa).

Residues glycine 15, glutamate 34, cysteine 45, alanine 46, glycine 48, arginine 99, alanine 123, aspartate 279, glycine 291, and isoleucine 292 each contribute to the FAD site. Valine 370 serves as a coordination point for a 2,3-bis-O-(geranylgeranyl)-sn-glycerol 1-phospholipid.

This sequence belongs to the geranylgeranyl reductase family. DGGGPL reductase subfamily. It depends on FAD as a cofactor.

It carries out the reaction a 2,3-bis-O-phytanyl-sn-glycerol 1-phospholipid + 8 oxidized 2[4Fe-4S]-[ferredoxin] = a 2,3-bis-O-(geranylgeranyl)-sn-glycerol 1-phospholipid + 8 reduced 2[4Fe-4S]-[ferredoxin] + 16 H(+). It catalyses the reaction 2,3-bis-O-(phytanyl)-sn-glycerol 1-phosphate + 8 oxidized 2[4Fe-4S]-[ferredoxin] = 2,3-bis-O-(geranylgeranyl)-sn-glycerol 1-phosphate + 8 reduced 2[4Fe-4S]-[ferredoxin] + 16 H(+). The enzyme catalyses a 2,3-bis-O-phytanyl-sn-glycerol 1-phospholipid + 8 A = a 2,3-bis-O-(geranylgeranyl)-sn-glycerol 1-phospholipid + 8 AH2. The catalysed reaction is CDP-2,3-bis-O-(geranylgeranyl)-sn-glycerol + 8 AH2 = CDP-2,3-bis-O-(phytanyl)-sn-glycerol + 8 A. It carries out the reaction archaetidylserine + 8 AH2 = 2,3-bis-O-phytanyl-sn-glycero-3-phospho-L-serine + 8 A. It functions in the pathway membrane lipid metabolism; glycerophospholipid metabolism. Its function is as follows. Is involved in the reduction of 2,3-digeranylgeranylglycerophospholipids (unsaturated archaeols) into 2,3-diphytanylglycerophospholipids (saturated archaeols) in the biosynthesis of archaeal membrane lipids. Catalyzes the formation of archaetidic acid (2,3-di-O-phytanyl-sn-glyceryl phosphate) from 2,3-di-O-geranylgeranylglyceryl phosphate (DGGGP) via the hydrogenation of each double bond of the isoprenoid chains. Is also probably able to reduce double bonds of geranyl groups in CDP-2,3-bis-O-(geranylgeranyl)-sn-glycerol and archaetidylserine, thus acting at various stages in the biosynthesis of archaeal membrane lipids. This Methanocella arvoryzae (strain DSM 22066 / NBRC 105507 / MRE50) protein is Digeranylgeranylglycerophospholipid reductase.